The primary structure comprises 347 residues: tRNA N6-adenosine threonylcarbamoyltransferase (347 aa).

2 residues coordinate Fe cation: His113 and His117. Residues 136-140, Asp170, Gly183, Asp187, and Asn282 each bind substrate; that span reads IVSGG. Asp310 contacts Fe cation.

Belongs to the KAE1 / TsaD family. Requires Fe(2+) as cofactor.

It is found in the cytoplasm. The catalysed reaction is L-threonylcarbamoyladenylate + adenosine(37) in tRNA = N(6)-L-threonylcarbamoyladenosine(37) in tRNA + AMP + H(+). Its function is as follows. Required for the formation of a threonylcarbamoyl group on adenosine at position 37 (t(6)A37) in tRNAs that read codons beginning with adenine. Is involved in the transfer of the threonylcarbamoyl moiety of threonylcarbamoyl-AMP (TC-AMP) to the N6 group of A37, together with TsaE and TsaB. TsaD likely plays a direct catalytic role in this reaction. This is tRNA N6-adenosine threonylcarbamoyltransferase from Bifidobacterium adolescentis (strain ATCC 15703 / DSM 20083 / NCTC 11814 / E194a).